Here is a 400-residue protein sequence, read N- to C-terminus: Tryptophan synthase beta chain (400 aa).

At Lys-90 the chain carries N6-(pyridoxal phosphate)lysine.

Belongs to the TrpB family. Tetramer of two alpha and two beta chains. Pyridoxal 5'-phosphate is required as a cofactor.

The enzyme catalyses (1S,2R)-1-C-(indol-3-yl)glycerol 3-phosphate + L-serine = D-glyceraldehyde 3-phosphate + L-tryptophan + H2O. It participates in amino-acid biosynthesis; L-tryptophan biosynthesis; L-tryptophan from chorismate: step 5/5. In terms of biological role, the beta subunit is responsible for the synthesis of L-tryptophan from indole and L-serine. The chain is Tryptophan synthase beta chain (trpB) from Bacillus subtilis (strain 168).